The following is a 418-amino-acid chain: Serine hydroxymethyltransferase (418 aa).

Residues leucine 121 and 125–127 contribute to the (6S)-5,6,7,8-tetrahydrofolate site; that span reads GHL. At lysine 230 the chain carries N6-(pyridoxal phosphate)lysine. 356 to 358 provides a ligand contact to (6S)-5,6,7,8-tetrahydrofolate; sequence SPF.

It belongs to the SHMT family. As to quaternary structure, homodimer. Pyridoxal 5'-phosphate serves as cofactor.

Its subcellular location is the cytoplasm. It catalyses the reaction (6R)-5,10-methylene-5,6,7,8-tetrahydrofolate + glycine + H2O = (6S)-5,6,7,8-tetrahydrofolate + L-serine. It functions in the pathway one-carbon metabolism; tetrahydrofolate interconversion. Its pathway is amino-acid biosynthesis; glycine biosynthesis; glycine from L-serine: step 1/1. Its function is as follows. Catalyzes the reversible interconversion of serine and glycine with tetrahydrofolate (THF) serving as the one-carbon carrier. This reaction serves as the major source of one-carbon groups required for the biosynthesis of purines, thymidylate, methionine, and other important biomolecules. Also exhibits THF-independent aldolase activity toward beta-hydroxyamino acids, producing glycine and aldehydes, via a retro-aldol mechanism. This is Serine hydroxymethyltransferase from Shewanella pealeana (strain ATCC 700345 / ANG-SQ1).